A 182-amino-acid chain; its full sequence is ATP-dependent protease subunit HslV (182 aa).

Thr12 is an active-site residue. Residues Ala167, Cys170, and Thr173 each contribute to the Na(+) site.

Belongs to the peptidase T1B family. HslV subfamily. In terms of assembly, a double ring-shaped homohexamer of HslV is capped on each side by a ring-shaped HslU homohexamer. The assembly of the HslU/HslV complex is dependent on binding of ATP.

Its subcellular location is the cytoplasm. It carries out the reaction ATP-dependent cleavage of peptide bonds with broad specificity.. With respect to regulation, allosterically activated by HslU binding. Protease subunit of a proteasome-like degradation complex believed to be a general protein degrading machinery. In Chlorobium chlorochromatii (strain CaD3), this protein is ATP-dependent protease subunit HslV.